Reading from the N-terminus, the 486-residue chain is ATP-dependent rRNA helicase RRP3 (486 aa).

Positions 1 to 11 are enriched in basic residues; that stretch reads MSKVTKQSKSH. Residues 1–52 form a disordered region; sequence MSKVTKQSKSHKSSELVSLAEKIKQKALENRKQSREESQATEEANTASETEA. A coiled-coil region spans residues 17 to 49; sequence VSLAEKIKQKALENRKQSREESQATEEANTASE. Residues 21–38 are compositionally biased toward basic and acidic residues; that stretch reads EKIKQKALENRKQSREES. Over residues 41–52 the composition is skewed to low complexity; sequence TEEANTASETEA. The short motif at 66–94 is the Q motif element; it reads SSFRELDLVPELIEACDNLNFTKPTPIQS. The Helicase ATP-binding domain maps to 97–269; sequence IPPALQGKDI…RASLTNPVKC (173 aa). 110 to 117 lines the ATP pocket; that stretch reads AQTGSGKT. A DEAD box motif is present at residues 216–219; the sequence is DEAD. A Helicase C-terminal domain is found at 300–446; the sequence is LLNEFIGKTT…SIVLSLRDSV (147 aa). The interval 459-486 is disordered; that stretch reads RRNKEKQTRGKGRRSRTATRENMDKEEE. Basic and acidic residues predominate over residues 476–486; the sequence is ATRENMDKEEE.

Belongs to the DEAD box helicase family. DDX47/RRP3 subfamily. In terms of assembly, interacts with the SSU processome.

It localises to the nucleus. It carries out the reaction ATP + H2O = ADP + phosphate + H(+). ATP-dependent rRNA helicase required for pre-ribosomal RNA processing. Involved in the maturation of the 35S-pre-rRNA and to its cleavage to mature 18S rRNA. This chain is ATP-dependent rRNA helicase RRP3, found in Eremothecium gossypii (strain ATCC 10895 / CBS 109.51 / FGSC 9923 / NRRL Y-1056) (Yeast).